Consider the following 216-residue polypeptide: Small ribosomal subunit protein uS3 (216 aa).

A KH type-2 domain is found at leucine 20–histidine 91.

It belongs to the universal ribosomal protein uS3 family.

This is Small ribosomal subunit protein uS3 (RPS3) from Encephalitozoon cuniculi (strain GB-M1) (Microsporidian parasite).